The chain runs to 261 residues: Homeobox protein engrailed-2b (261 aa).

Composition is skewed to basic and acidic residues over residues 1-21, 53-72, and 100-116; these read MEEN…DESN, GRRK…RENR, and KKTD…RAET. Disordered regions lie at residues 1 to 24, 53 to 125, and 152 to 176; these read MEEN…NRAI, GRRK…SSDS, and DRPS…KRPR. Positions 172–231 form a DNA-binding region, homeobox; that stretch reads DKRPRTAFTAEQLQRLKNEFQNNRYLTEQRRQALAQELGLNESQIKIWFQNKRAKIKKAT.

The protein belongs to the engrailed homeobox family.

Its subcellular location is the nucleus. The polypeptide is Homeobox protein engrailed-2b (eng2b) (Danio rerio (Zebrafish)).